The primary structure comprises 445 residues: Branched-chain amino acid permease BraB (445 aa).

12 helical membrane passes run 11–31 (IIIGFMLFALFFGAGNMIYPP), 45–65 (IGGFLLTGVGLPLLGIIAIAL), 79–99 (PVFGTIFTVVLYLSIGPLFAI), 122–142 (LSLLIFTLIFFGVTYYLALNP), 158–178 (FTIILIIVLKAIFTPMGGLGA), 192–212 (FLEGYKTMDALASIVFGVVVV), 233–253 (AGVIAALGLTFIYVSLAYLGA), 275–295 (YLFGSLGNIVLGAAITVACLT), 311–331 (LIPALSYKIVVTIVTLFSLII), 339–359 (IIAFSVPILSAIYPLAIVIIV), 375–395 (IACLIGTGLFSILDGIKAAGF), and 415–435 (IGWVLPGIVGAVIGYVLTLFI).

It belongs to the branched chain amino acid transporter family.

It localises to the cell membrane. Its function is as follows. Branched-chain amino acid transport system which is involved in the uptake of isoleucine, valine and probably leucine. Together with BcaP and BrnQ, plays an important role in the activation of CodY, a branched-chain amino acid-responsive transcriptional regulator that controls the expression of several dozen transcription units in B.subtilis. In Bacillus subtilis (strain 168), this protein is Branched-chain amino acid permease BraB.